A 413-amino-acid chain; its full sequence is Inactive serine protease 35 (413 aa).

The signal sequence occupies residues 1-16 (MENMLLWLIFFTPGWT). N90 carries N-linked (GlcNAc...) asparagine glycosylation. The 285-residue stretch at 124–408 (VYGTDSRFSI…ICLWIHGNDA (285 aa)) folds into the Peptidase S1 domain. C154 and C170 are oxidised to a cystine. The segment covering 191-207 (MRNKSGGKKRRGSKRSR) has biased composition (basic residues). A disordered region spans residues 191–250 (MRNKSGGKKRRGSKRSRREASGGDQREGTREHLRERAKGGRRRKKSGRGQRIAEGRPSFQ). Over residues 208-228 (REASGGDQREGTREHLRERAK) the composition is skewed to basic and acidic residues. The segment covering 229 to 238 (GGRRRKKSGR) has biased composition (basic residues).

The protein belongs to the peptidase S1 family.

It localises to the secreted. This is Inactive serine protease 35 (PRSS35) from Homo sapiens (Human).